Reading from the N-terminus, the 397-residue chain is Purine nucleoside transport protein NupG (397 aa).

The next 11 helical transmembrane spans lie at 1 to 21 (MYFLLNLVGLIVIMAVVFLCS), 32 to 52 (IITLIVLELLITWFMLGTKVG), 62 to 82 (FFTWLIACASDGIAFAFPSVM), 97 to 117 (IIFIVTFFDILTYFGILPWLI), 133 to 153 (LESFFSIQMMFLGNTEALAVI), 165 to 185 (LLTFGLMSMSSISGSIIGSYL), 187 to 207 (MVPATYVFTAIPLNCLNALII), 242 to 262 (MLVGMNMVIVILAMVIGYVAL), 282 to 302 (IFAYLFSPFAFLLGLPVHDAM), 335 to 355 (VAVATTFLTSFANFSTVGMIY), and 377 to 397 (LLVSGIAVSLLSAAIVGLFVW).

This sequence belongs to the concentrative nucleoside transporter (CNT) (TC 2.A.41) family.

It localises to the cell membrane. Involved in the uptake of the purine ribonucleosides inosine and guanosine. The protein is Purine nucleoside transport protein NupG (nupG) of Bacillus subtilis (strain 168).